The chain runs to 212 residues: Protein-L-isoaspartate O-methyltransferase (212 aa).

Ser-60 is a catalytic residue.

Belongs to the methyltransferase superfamily. L-isoaspartyl/D-aspartyl protein methyltransferase family.

Its subcellular location is the cytoplasm. The catalysed reaction is [protein]-L-isoaspartate + S-adenosyl-L-methionine = [protein]-L-isoaspartate alpha-methyl ester + S-adenosyl-L-homocysteine. Catalyzes the methyl esterification of L-isoaspartyl residues in peptides and proteins that result from spontaneous decomposition of normal L-aspartyl and L-asparaginyl residues. It plays a role in the repair and/or degradation of damaged proteins. This is Protein-L-isoaspartate O-methyltransferase from Pseudomonas entomophila (strain L48).